We begin with the raw amino-acid sequence, 190 residues long: MGKYYCDYCDVFLVSESPSVRKAHNSGRNHLTNVRDYYSSLGHDKAQSYIDEITRMFETGGGNSTSNRGPGGNPPGSQPGPPNAGMSGPMRPPFSNSTAGPNMPPLPPAMLALMNGQNGMSSPGSGPPPMRFAGPPIPNNMPPGMMQPPHVNGYSSGPLPPQPQPASGGQGAPPLTARMNPDRARQLGLI.

The Matrin-type zinc finger occupies 4 to 36; it reads YYCDYCDVFLVSESPSVRKAHNSGRNHLTNVRD. Residues 57-190 form a disordered region; it reads FETGGGNSTS…PDRARQLGLI (134 aa). The span at 72–82 shows a compositional bias: pro residues; sequence GNPPGSQPGPP. Residues 109 to 124 show a composition bias toward low complexity; it reads AMLALMNGQNGMSSPG. Residues 125 to 141 show a composition bias toward pro residues; it reads SGPPPMRFAGPPIPNNM. The segment covering 180 to 190 has biased composition (basic and acidic residues); the sequence is NPDRARQLGLI.

The protein belongs to the U1 small nuclear ribonucleoprotein C family. In terms of assembly, U1 snRNP is composed of the 7 core Sm proteins B/B', D1, D2, D3, E, F and G that assemble in a heptameric protein ring on the Sm site of the small nuclear RNA to form the core snRNP, and at least 3 U1 snRNP-specific proteins U1-70K, U1-A and U1-C. U1-C interacts with U1 snRNA and the 5' splice-site region of the pre-mRNA.

The protein localises to the nucleus. Functionally, component of the spliceosomal U1 snRNP, which is essential for recognition of the pre-mRNA 5' splice-site and the subsequent assembly of the spliceosome. U1-C is directly involved in initial 5' splice-site recognition for both constitutive and regulated alternative splicing. The interaction with the 5' splice-site seems to precede base-pairing between the pre-mRNA and the U1 snRNA. Stimulates commitment or early (E) complex formation by stabilizing the base pairing of the 5' end of the U1 snRNA and the 5' splice-site region. This chain is U1 small nuclear ribonucleoprotein C-1, found in Puccinia graminis f. sp. tritici (strain CRL 75-36-700-3 / race SCCL) (Black stem rust fungus).